We begin with the raw amino-acid sequence, 274 residues long: Bis(5'-nucleosyl)-tetraphosphatase, symmetrical (274 aa).

The protein belongs to the Ap4A hydrolase family.

It catalyses the reaction P(1),P(4)-bis(5'-adenosyl) tetraphosphate + H2O = 2 ADP + 2 H(+). In terms of biological role, hydrolyzes diadenosine 5',5'''-P1,P4-tetraphosphate to yield ADP. This is Bis(5'-nucleosyl)-tetraphosphatase, symmetrical from Shewanella loihica (strain ATCC BAA-1088 / PV-4).